The primary structure comprises 336 residues: CASP-like protein UU1 (336 aa).

Topologically, residues 1–170 (MGKGPGLDPS…PAMESNKDDN (170 aa)) are cytoplasmic. Residues 171–191 (FFGAIVLSLRAAQIVFTVVGL) traverse the membrane as a helical segment. The Extracellular segment spans residues 192 to 222 (GVMGSLKHTSHGDYYYYYYDFSFTQVDSYIG). A helical transmembrane segment spans residues 223-243 (VLSLDVIVCLYAIVQLVLCFI). Over 244–261 (QRSNQGKYLSSPTTVAAK) the chain is Cytoplasmic. Residues 262-282 (LTFVFDQVLAYALVATAGAAA) form a helical membrane-spanning segment. The Extracellular portion of the chain corresponds to 283-307 (GSALEIRKGTSCSGTWTVICSKGEA). A helical membrane pass occupies residues 308 to 328 (SVAMSFFAFAFLAATAAVYSV). Topologically, residues 329–336 (RLLRITGR) are cytoplasmic.

This sequence belongs to the Casparian strip membrane proteins (CASP) family. As to quaternary structure, homodimer and heterodimers.

It localises to the cell membrane. The chain is CASP-like protein UU1 from Physcomitrium patens (Spreading-leaved earth moss).